The primary structure comprises 274 residues: Large ribosomal subunit protein uL2cz/uL2cy (274 aa).

Disordered stretches follow at residues 1–21 (MAIH…VDSQ) and 224–274 (NPVD…RRSK).

This sequence belongs to the universal ribosomal protein uL2 family. In terms of assembly, part of the 50S ribosomal subunit.

The protein localises to the plastid. It is found in the chloroplast. This is Large ribosomal subunit protein uL2cz/uL2cy (rpl2-A) from Gossypium hirsutum (Upland cotton).